We begin with the raw amino-acid sequence, 85 residues long: Defensin-like protein 11 (85 aa).

The signal sequence occupies residues 1–29 (MGKTISFSAIILVFLLVSTGLMKQGDAQA). 4 cysteine pairs are disulfide-bonded: Cys32–Cys84, Cys44–Cys68, Cys54–Cys75, and Cys58–Cys77.

This sequence belongs to the DEFL family.

It is found in the secreted. The sequence is that of Defensin-like protein 11 from Arabidopsis thaliana (Mouse-ear cress).